A 465-amino-acid chain; its full sequence is Cysteine--tRNA ligase (465 aa).

Cys-30 is a binding site for Zn(2+). The 'HIGH' region motif lies at Met-32–His-42. 3 residues coordinate Zn(2+): Cys-214, His-239, and Glu-243. Residues Lys-271–Ser-275 carry the 'KMSKS' region motif. Lys-274 provides a ligand contact to ATP.

Belongs to the class-I aminoacyl-tRNA synthetase family. In terms of assembly, monomer. Zn(2+) serves as cofactor.

Its subcellular location is the cytoplasm. The enzyme catalyses tRNA(Cys) + L-cysteine + ATP = L-cysteinyl-tRNA(Cys) + AMP + diphosphate. The polypeptide is Cysteine--tRNA ligase (Paraburkholderia xenovorans (strain LB400)).